The following is a 468-amino-acid chain: UDP-N-acetylmuramate--L-alanine ligase (468 aa).

114–120 (GTHGKTT) provides a ligand contact to ATP.

This sequence belongs to the MurCDEF family.

It localises to the cytoplasm. The catalysed reaction is UDP-N-acetyl-alpha-D-muramate + L-alanine + ATP = UDP-N-acetyl-alpha-D-muramoyl-L-alanine + ADP + phosphate + H(+). It participates in cell wall biogenesis; peptidoglycan biosynthesis. Functionally, cell wall formation. The sequence is that of UDP-N-acetylmuramate--L-alanine ligase from Methylorubrum populi (strain ATCC BAA-705 / NCIMB 13946 / BJ001) (Methylobacterium populi).